The chain runs to 207 residues: Uracil phosphoribosyltransferase (207 aa).

Residues Arg77, Arg102, and 129–137 (DPMLATGVS) contribute to the 5-phospho-alpha-D-ribose 1-diphosphate site. Uracil is bound by residues Ile192 and 197–199 (GDA). Asp198 is a binding site for 5-phospho-alpha-D-ribose 1-diphosphate.

The protein belongs to the UPRTase family. Requires Mg(2+) as cofactor.

The enzyme catalyses UMP + diphosphate = 5-phospho-alpha-D-ribose 1-diphosphate + uracil. It participates in pyrimidine metabolism; UMP biosynthesis via salvage pathway; UMP from uracil: step 1/1. Its activity is regulated as follows. Allosterically activated by GTP. Its function is as follows. Catalyzes the conversion of uracil and 5-phospho-alpha-D-ribose 1-diphosphate (PRPP) to UMP and diphosphate. The chain is Uracil phosphoribosyltransferase from Fervidobacterium nodosum (strain ATCC 35602 / DSM 5306 / Rt17-B1).